Reading from the N-terminus, the 321-residue chain is Torsin-2A (321 aa).

An N-terminal signal peptide occupies residues 1–27 (MAVARHGCPPWGSILGLLVLALAAAAA). Residue 93–100 (GWTGTGKS) coordinates ATP. Asn-149 carries N-linked (GlcNAc...) asparagine glycosylation.

It belongs to the ClpA/ClpB family. Torsin subfamily. As to quaternary structure, homohexamer. Interacts with TOR1AIP1.

It is found in the endoplasmic reticulum lumen. The sequence is that of Torsin-2A (Tor2a) from Rattus norvegicus (Rat).